The sequence spans 62 residues: Single-pass membrane and coiled-coil domain-containing protein 4 homolog (62 aa).

The disordered stretch occupies residues 1-27 (MRQLPGKAAKETRKMKRERKQQNKEGH). The stretch at 9-31 (AKETRKMKRERKQQNKEGHNRVV) forms a coiled coil. A helical membrane pass occupies residues 30-50 (VVTVAIPVCLAVFVMLIVYVY).

The protein belongs to the SMCO4 family.

Its subcellular location is the membrane. This Nematostella vectensis (Starlet sea anemone) protein is Single-pass membrane and coiled-coil domain-containing protein 4 homolog.